The sequence spans 94 residues: Large ribosomal subunit protein bL25 (94 aa).

It belongs to the bacterial ribosomal protein bL25 family. As to quaternary structure, part of the 50S ribosomal subunit; part of the 5S rRNA/L5/L18/L25 subcomplex. Contacts the 5S rRNA. Binds to the 5S rRNA independently of L5 and L18.

Its function is as follows. This is one of the proteins that binds to the 5S RNA in the ribosome where it forms part of the central protuberance. This Citrobacter koseri (strain ATCC BAA-895 / CDC 4225-83 / SGSC4696) protein is Large ribosomal subunit protein bL25.